We begin with the raw amino-acid sequence, 244 residues long: MRNIKLTIEYDGTSYFGWQKQPIGNTIQQKVEEAIKKVTKEEVEILGSSRTDSGVHAKAYVANFKTNSNIPGKNFKAALNSKLPKDIVIINSEEVAEDFHARYMTTGKTYCYTILNREEPPALERNYVYHVKKQLDVESMKEACKYFLGKHDFKAFQRPGGTVKTSVRTITDIHIETEGNKIKIYVSADGFLYNMVRLIVGTLLKVGRGKEKPEYIKEVIDSGDRKKAGICVPPTGLCLEKVFY.

D52 acts as the Nucleophile in catalysis. Substrate is bound at residue Y110.

Belongs to the tRNA pseudouridine synthase TruA family. As to quaternary structure, homodimer.

It carries out the reaction uridine(38/39/40) in tRNA = pseudouridine(38/39/40) in tRNA. Functionally, formation of pseudouridine at positions 38, 39 and 40 in the anticodon stem and loop of transfer RNAs. This Clostridium perfringens (strain 13 / Type A) protein is tRNA pseudouridine synthase A 2.